The primary structure comprises 689 residues: tRNA wybutosine-synthesizing protein 4 (689 aa).

The segment at 1 to 33 (MTSTSKLDANQLARQRKKLEKDRRKKVYDDQQV) is disordered. Over residues 14-26 (RQRKKLEKDRRKK) the composition is skewed to basic residues. S-adenosyl-L-methionine contacts are provided by residues arginine 84, glycine 111, aspartate 137, 183 to 184 (DL), and glutamate 215.

This sequence belongs to the methyltransferase superfamily. LCMT family.

It catalyses the reaction 7-[(3S)-3-amino-3-carboxypropyl]wyosine(37) in tRNA(Phe) + S-adenosyl-L-methionine = 7-[(3S)-(3-amino-3-methoxycarbonyl)propyl]wyosine(37) in tRNA(Phe) + S-adenosyl-L-homocysteine. The enzyme catalyses 7-[(3S)-(3-amino-3-methoxycarbonyl)propyl]wyosine(37) in tRNA(Phe) + S-adenosyl-L-methionine + CO2 = wybutosine(37) in tRNA(Phe) + S-adenosyl-L-homocysteine + 2 H(+). It functions in the pathway tRNA modification; wybutosine-tRNA(Phe) biosynthesis. Its function is as follows. Probable S-adenosyl-L-methionine-dependent methyltransferase that acts as a component of the wybutosine biosynthesis pathway. Wybutosine is a hyper modified guanosine with a tricyclic base found at the 3'-position adjacent to the anticodon of eukaryotic phenylalanine tRNA. May methylate the carboxyl group of leucine residues to form alpha-leucine ester residues. This chain is tRNA wybutosine-synthesizing protein 4 (PPM2), found in Candida albicans (strain SC5314 / ATCC MYA-2876) (Yeast).